A 348-amino-acid polypeptide reads, in one-letter code: Sorbitol dehydrogenase (348 aa).

Zn(2+) is bound by residues cysteine 40, histidine 65, and glutamate 66. Residues isoleucine 179, aspartate 199, arginine 204, 269–271 (VGI), and 293–295 (SFR) contribute to the NAD(+) site. Arginine 295 lines the substrate pocket.

This sequence belongs to the zinc-containing alcohol dehydrogenase family. In terms of assembly, homotetramer. Zn(2+) serves as cofactor.

It catalyses the reaction xylitol + NAD(+) = D-xylulose + NADH + H(+). The catalysed reaction is L-iditol + NAD(+) = keto-L-sorbose + NADH + H(+). The enzyme catalyses keto-D-fructose + NADH + H(+) = D-sorbitol + NAD(+). Polyol dehydrogenase that catalyzes the reversible NAD(+)-dependent oxidation of various sugar alcohols. Is active with xylitol, L-iditol and D-sorbitol (D-glucitol) as substrates, leading to the C2-oxidized products D-xylulose, L-sorbose and D-fructose, respectively. Is a key enzyme in the polyol pathway that interconverts glucose and fructose via sorbitol, which constitutes an important alternate route for glucose metabolism. In Bombyx mori (Silk moth), this protein is Sorbitol dehydrogenase (SDH).